Consider the following 245-residue polypeptide: Protein DEHYDRATION-INDUCED 19 homolog 4 (245 aa).

It belongs to the Di19 family.

This is Protein DEHYDRATION-INDUCED 19 homolog 4 (DI19-4) from Oryza sativa subsp. japonica (Rice).